The chain runs to 706 residues: ATP-dependent zinc metalloprotease FtsH (706 aa).

A compositionally biased stretch (polar residues) spans 1 to 17 (MAKNSLKPSNPYNSEPE). The tract at residues 1-20 (MAKNSLKPSNPYNSEPETPQ) is disordered. Topologically, residues 1 to 24 (MAKNSLKPSNPYNSEPETPQPRPK) are cytoplasmic. Residues 25-45 (LPMIYYVVVIALLIGLQLAFF) traverse the membrane as a helical segment. The Periplasmic portion of the chain corresponds to 46-142 (WSGSSREIPY…RYEGSPGTTW (97 aa)). Positions 88–111 (GLPKQEEGNDTTRKLLPGAKTPEN) are disordered. A compositionally biased stretch (basic and acidic residues) spans 91-100 (KQEEGNDTTR). Residues 143–163 (ISELIQWVLPFALLFGLYFFI) traverse the membrane as a helical segment. At 164-706 (FRRMGAGGPG…LRQSRNVSDN (543 aa)) the chain is on the cytoplasmic side. 239–246 (GPPGTGKT) contacts ATP. His-462 contributes to the Zn(2+) binding site. Residue Glu-463 is part of the active site. Positions 466 and 539 each coordinate Zn(2+). The tract at residues 641–681 (RPGGQEEDSGEVDCSKKSAENGMVAHEPETTADAESTEKVG) is disordered.

It in the central section; belongs to the AAA ATPase family. This sequence in the C-terminal section; belongs to the peptidase M41 family. Homohexamer. Requires Zn(2+) as cofactor.

The protein localises to the cell inner membrane. In terms of biological role, acts as a processive, ATP-dependent zinc metallopeptidase for both cytoplasmic and membrane proteins. Plays a role in the quality control of integral membrane proteins. In Chlorobium luteolum (strain DSM 273 / BCRC 81028 / 2530) (Pelodictyon luteolum), this protein is ATP-dependent zinc metalloprotease FtsH.